The following is a 567-amino-acid chain: Alpha-glucosidase (567 aa).

The signal sequence occupies residues 1–17; the sequence is MKAVIVFCLMALSIVDA. 2 N-linked (GlcNAc...) asparagine glycosylation sites follow: Asn-88 and Asn-123. Residue Asp-223 is the Nucleophile of the active site. A glycan (N-linked (GlcNAc...) asparagine) is linked at Asn-247. Glu-286 serves as the catalytic Proton donor. 5 N-linked (GlcNAc...) asparagine glycosylation sites follow: Asn-290, Asn-313, Asn-319, Asn-499, and Asn-507.

As to quaternary structure, monomer. As to expression, expressed specifically in the hypopharyngeal glands of worker bees. Also found in the brain of worker bees (at protein level).

It catalyses the reaction Hydrolysis of terminal, non-reducing (1-&gt;4)-linked alpha-D-glucose residues with release of alpha-D-glucose.. Functionally, converts sucrose in nectar to glucose and fructose. The polypeptide is Alpha-glucosidase (Apis mellifera (Honeybee)).